The following is a 369-amino-acid chain: Ferredoxin--NADP reductase 2 (369 aa).

Residues 1–21 are disordered; the sequence is MDLSIPNPVADATRQVEGGSP. Asp58, Gln66, Tyr71, Val111, Phe146, Asp311, and Thr352 together coordinate FAD.

Belongs to the ferredoxin--NADP reductase type 2 family. Homodimer. It depends on FAD as a cofactor.

It carries out the reaction 2 reduced [2Fe-2S]-[ferredoxin] + NADP(+) + H(+) = 2 oxidized [2Fe-2S]-[ferredoxin] + NADPH. The protein is Ferredoxin--NADP reductase 2 of Cupriavidus taiwanensis (strain DSM 17343 / BCRC 17206 / CCUG 44338 / CIP 107171 / LMG 19424 / R1) (Ralstonia taiwanensis (strain LMG 19424)).